Reading from the N-terminus, the 465-residue chain is FAD-dependent monooxygenase pyr5 (465 aa).

A signal peptide spans 1–16 (MRVLIIGGSIAGLTLA). 3 residues coordinate FAD: Glu30, Gly44, and Arg103. Tyr210 is an active-site residue. Asp306 and Ala319 together coordinate FAD. The helical transmembrane segment at 440–456 (PTFPLTVAGLCLVAIVI) threads the bilayer.

This sequence belongs to the paxM FAD-dependent monooxygenase family. FAD serves as cofactor.

It is found in the membrane. It catalyses the reaction 4-hydroxy-3-[(2E,6E)-farnesyl]-6-(pyridin-3-yl)-2H-pyran-2-one + NADPH + O2 + H(+) = 2-oxo-3-[(8S)-epoxy-(2E,6E)-farnesyl]-6-(pyridin-3-yl)-2H-pyran-4-olate + NADP(+) + H2O. Its pathway is secondary metabolite biosynthesis; terpenoid biosynthesis. Its function is as follows. FAD-dependent monooxygenase; part of the gene cluster that mediates the biosynthesis of pyripyropene A, a specific human acyl-coenzyme A:cholesterol acyltransferase 2 inhibitor. The first step of the pathway is the synthesis of nicotinyl-CoA from nicotinic acid by the nicotinic acid-CoA ligase pyr1. Nicotinyl-CoA is then a substrate of polyketide synthase pyr2 to produce 4-hydroxy-6-(3-pyridinyl)-2H-pyran-2-one (HPPO) which is further prenylated by the polyprenyl transferase pyr6 to yield farnesyl-HPPO. The next steps consist of an epoxidation of farnesyl-HPPO to epoxyfarnesyl-HPPO by FAD-dependent monooxygenase pyr5 and a cyclization of the terpenoid portion by the terpene cyclase pyr4 to yield deacetyl-pyripyropene E. The 2 cytochrome P450 monooxygenases pyr3 and pyr9, and the 2 acetyltransferases pyr7 and pyr8 are involved in the conversion of deacetyl-pyripyropene E into pyripyropene A through several cycles of oxidation and acetylation steps. Pyr7 acetylates deacetyl-pyripyropene E to pyripyropene E which is oxidized to 11-deacetyl-pyripyropene O by pyr3, which is in turn acetylated into pyripyropene O by pyr8. Pyripyropene O is then oxidized to deacetyl-pyripyropene A by pyr9. Deacetyl-pyripyropene A is finally acetylated to pyripyropene A by pyr8. In Aspergillus fumigatus (strain ATCC MYA-4609 / CBS 101355 / FGSC A1100 / Af293) (Neosartorya fumigata), this protein is FAD-dependent monooxygenase pyr5.